Here is a 509-residue protein sequence, read N- to C-terminus: Dye-decolorizing peroxidase AauDyP1 (509 aa).

Positions 1-22 (MRLSPVFVALLSGLLAADLGLA) are cleaved as a signal peptide. Residues 23-61 (RSVAPRVADSPAAVTGTRKTSLLKNVAGLPPVPSAAQVA) constitute a propeptide that is removed on maturation. D229 (proton acceptor) is an active-site residue. The N-linked (GlcNAc...) asparagine glycan is linked to N343. H365 contacts heme. 3 N-linked (GlcNAc...) asparagine glycosylation sites follow: N383, N410, and N476.

This sequence belongs to the DyP-type peroxidase family. Heme b is required as a cofactor.

The protein resides in the secreted. The enzyme catalyses Reactive Blue 5 + 2 H2O2 = 2,2'-disulfonyl azobenzene + 3-[(4-amino-6-chloro-1,3,5-triazin-2-yl)amino]benzenesulfonate + phthalate + 2 H2O + 2 H(+). The catalysed reaction is 2 a phenolic donor + H2O2 = 2 a phenolic radical donor + 2 H2O. Inhibited by imidazole. Manganese-independent peroxidase that is able to convert a large number of compounds, but its physiological substrate is not known. In addition to classic peroxidase substrates (e.g. 2,6-dimethoxyphenol), oxidizes dyes such as Reactive Blue 5 and Reactive Black 5. The chain is Dye-decolorizing peroxidase AauDyP1 from Auricularia auricula-judae (Judas ear fungus).